Here is a 409-residue protein sequence, read N- to C-terminus: Shaggy-related protein kinase gamma (409 aa).

Ala2 bears the N-acetylalanine mark. One can recognise a Protein kinase domain in the interval Tyr73–Phe357. ATP is bound by residues Val79–Val87 and Lys102. Catalysis depends on Asp198, which acts as the Proton acceptor. Position 233 is a phosphotyrosine (Tyr233).

The protein belongs to the protein kinase superfamily. CMGC Ser/Thr protein kinase family. GSK-3 subfamily. As to quaternary structure, binds to KIB1. Component of a complex made of POLAR, BASL, ASK7/BIN2 and ASK3/SK12. Binds to POLAR and BASL. Autophosphorylated mainly on threonine and serine residues. In terms of tissue distribution, roots, shoots and leaves.

The protein resides in the cytoplasm. The protein localises to the cell cortex. It carries out the reaction L-seryl-[protein] + ATP = O-phospho-L-seryl-[protein] + ADP + H(+). The catalysed reaction is L-threonyl-[protein] + ATP = O-phospho-L-threonyl-[protein] + ADP + H(+). In terms of biological role, may mediate extracellular signals to regulate transcription in differentiating cells. Probably involved first at the cortical polarity site, to restrict MAPK signaling and promote asymmetric cell division (ACD), and second in the nucleus of stomatal lineage ground cells (SLGCs) or meristemoids, to limit cell division and to promote differentiation into pavement or stomatal guard cells, respectively. Phosphorylate YDA and SPCH in vitro. In Arabidopsis thaliana (Mouse-ear cress), this protein is Shaggy-related protein kinase gamma.